Consider the following 222-residue polypeptide: 2-C-methyl-D-erythritol 4-phosphate cytidylyltransferase (222 aa).

This sequence belongs to the IspD/TarI cytidylyltransferase family. IspD subfamily.

It catalyses the reaction 2-C-methyl-D-erythritol 4-phosphate + CTP + H(+) = 4-CDP-2-C-methyl-D-erythritol + diphosphate. The protein operates within isoprenoid biosynthesis; isopentenyl diphosphate biosynthesis via DXP pathway; isopentenyl diphosphate from 1-deoxy-D-xylulose 5-phosphate: step 2/6. Its function is as follows. Catalyzes the formation of 4-diphosphocytidyl-2-C-methyl-D-erythritol from CTP and 2-C-methyl-D-erythritol 4-phosphate (MEP). In Porphyromonas gingivalis (strain ATCC BAA-308 / W83), this protein is 2-C-methyl-D-erythritol 4-phosphate cytidylyltransferase.